The chain runs to 201 residues: Ras-related protein Rab-9B (201 aa).

Residues V18, G19, K20, S21, S22, D33, S34, A36, H38, and T39 each coordinate GTP. S21 lines the Mg(2+) pocket. The Switch 1 signature appears at 31-42 (KFDSQAFHTIGV). S34 bears the Phosphoserine mark. T39 and D62 together coordinate Mg(2+). The Switch 2 motif lies at 64 to 78 (AGQERFKSLRTPFYR). GTP contacts are provided by G65, N124, K125, A155, and K156. S-geranylgeranyl cysteine attachment occurs at residues C200 and C201.

It belongs to the small GTPase superfamily. Rab family. In terms of assembly, interacts (GTP-bound form) with SGSM1; the GDP-bound form has much lower affinity for SGSM1. The GTP-bound form but not the GDP-bound form interacts with HPS4 and the BLOC-3 complex (heterodimer of HPS1 and HPS4) but does not interact with HPS1 alone. Interacts (GTP-bound form) with NDE1. It depends on Mg(2+) as a cofactor.

It is found in the cell membrane. It localises to the cytoplasmic vesicle. The protein localises to the phagosome membrane. It carries out the reaction GTP + H2O = GDP + phosphate + H(+). Its activity is regulated as follows. Regulated by guanine nucleotide exchange factors (GEFs) which promote the exchange of bound GDP for free GTP. Regulated by GTPase activating proteins (GAPs) which increase the GTP hydrolysis activity. Inhibited by GDP dissociation inhibitors (GDIs). Its function is as follows. The small GTPases Rab are key regulators of intracellular membrane trafficking, from the formation of transport vesicles to their fusion with membranes. Rabs cycle between an inactive GDP-bound form and an active GTP-bound form that is able to recruit to membranes different sets of downstream effectors directly responsible for vesicle formation, movement, tethering and fusion. RAB9B is involved in the transport of proteins between the endosomes and the trans Golgi network. May use NDE1/NDEL1 as an effector to interact with the dynein motor complex in order to control retrograde trafficking of RAB9-associated late endosomes to the TGN. The polypeptide is Ras-related protein Rab-9B (RAB9B) (Pongo abelii (Sumatran orangutan)).